We begin with the raw amino-acid sequence, 916 residues long: Calcium homeostasis endoplasmic reticulum protein (916 aa).

M1 is modified (N-acetylmethionine). The SURP motif repeat unit spans residues 15 to 57 (VIDKLAQFVARNGPEFEKMTMEKQKDNPKFSFLFGGEFYSYYK). K18 carries the post-translational modification N6-acetyllysine. Residues 149–289 (ETQLDMNEFD…QLQSPALGLG (141 aa)) form the CID domain. Disordered regions lie at residues 336–549 (QQQQ…RFPP) and 601–635 (HPPW…PHIN). The span at 354–374 (TPPPPAPPPAPAPAPAIPPTT) shows a compositional bias: pro residues. Residues 480–501 (WNNQPDAAWNSQFEGPWNSQHE) are compositionally biased toward polar residues. Residues 525 to 541 (PFPPHQQHPQFNQPPHP) show a composition bias toward pro residues. Residue Y714 is modified to Phosphotyrosine. The tract at residues 722 to 878 (RARRRKGQEK…DPIKGGDVRD (157 aa)) is disordered. Positions 739 to 749 (SRSRSKSRGRS) are enriched in basic residues. The span at 750–766 (SSRSNSRSSKSSGSYSR) shows a compositional bias: low complexity. Residues 767–815 (SRSRSCSRSYSRSRSRSRSRSRSSRSRSRSQSRSRSKSYSPGRRRRSRS) are compositionally biased toward basic residues. Phosphoserine occurs at positions 813, 815, and 817. T819 bears the Phosphothreonine mark. The residue at position 828 (S828) is a Phosphoserine. Residues 841 to 891 (EENKGHQMLVKMGWSGSGGLGAKEQGIQDPIKGGDVRDKWDQYKGVGVALD) form the G-patch domain. Residue K844 forms a Glycyl lysine isopeptide (Lys-Gly) (interchain with G-Cter in SUMO2) linkage. Phosphoserine occurs at positions 855 and 857. A Glycyl lysine isopeptide (Lys-Gly) (interchain with G-Cter in SUMO2) cross-link involves residue K872. An N6-acetyllysine modification is found at K879. A Phosphoserine modification is found at S904.

Expressed in brain, placenta, lung, liver, kidney, pancreas, cardiac and skeletal muscle, and in cultured HEL and Dami cells.

The protein resides in the cytoplasm. It localises to the perinuclear region. The protein localises to the endoplasmic reticulum. Its function is as follows. Involved in calcium homeostasis, growth and proliferation. This is Calcium homeostasis endoplasmic reticulum protein from Homo sapiens (Human).